The sequence spans 461 residues: Porin AaxA (461 aa).

Positions 1–22 are cleaved as a signal peptide; the sequence is MSFRSILLTALLSLSFTNTMQA.

It belongs to the OprB family.

The protein localises to the cell outer membrane. Its function is as follows. Facilitates L-arginine uptake, as part of the AaxABC system. The arginine uptake by the bacterium in the macrophage may be a virulence factor against the host innate immune response. This Chlamydia muridarum (strain MoPn / Nigg) protein is Porin AaxA (aaxA).